The sequence spans 36 residues: Peruvianin-1 (36 aa).

Belongs to the germin family. In terms of assembly, homohexamer, possibly consisting of a trimer of dimers. Glycosylated.

With respect to regulation, inhibited by iodoacetamide and trans-epoxysuccinyl-L-leucylamido(4-guanidino)butane (E-64) but not by phenylmethylsulfonyl fluoride (PMSF), pepstatin-A, ethylenediamine tetra acetic acid (EDTA) or ethylene glycol tetraacetic acid (EGTA). Functionally, cysteine protease able to degrade azocasein and benzoyl-arginine-beta-naphtylamide (BANA) in vitro. The sequence is that of Peruvianin-1 from Thevetia peruviana (Yellow oleander).